A 362-amino-acid chain; its full sequence is Putative HLA class I histocompatibility antigen, alpha chain H (362 aa).

The signal sequence occupies residues 1–24; the sequence is MVLMAPRTLLLLLSGALALTQTWA. The interval 25-114 is alpha-1; sequence RSHSMRYFYT…ALRYYNQSEG (90 aa). Topologically, residues 25 to 308 are extracellular; that stretch reads RSHSMRYFYT…EPSSQPTVPI (284 aa). Asn110 carries N-linked (GlcNAc...) asparagine glycosylation. An alpha-2 region spans residues 115 to 206; sequence GSHTMQVMYG…ENGKETLQRA (92 aa). Residues 207–298 are alpha-3; that stretch reads DPPKTHMTHH…GLPEPLTLRW (92 aa). Residues 209 to 297 enclose the Ig-like C1-type domain; the sequence is PKTHMTHHPI…EGLPEPLTLR (89 aa). A disulfide bridge connects residues Cys227 and Cys283. Positions 299 to 308 are connecting peptide; sequence EPSSQPTVPI. The helical transmembrane segment at 309-332 threads the bilayer; sequence VGIVAGLVLLVAVVTGAVVAAVMW. The Cytoplasmic segment spans residues 333-362; that stretch reads RKKSSDRKGGSYSQAASSNSAQGSDVSLTA. Residues 337–362 form a disordered region; the sequence is SDRKGGSYSQAASSNSAQGSDVSLTA. The span at 342-356 shows a compositional bias: low complexity; sequence GSYSQAASSNSAQGS.

It belongs to the MHC class I family. In terms of assembly, heterodimer of an alpha chain and a beta chain (beta-2-microglobulin).

The protein resides in the cell membrane. In terms of biological role, involved in the presentation of foreign antigens to the immune system. In Homo sapiens (Human), this protein is Putative HLA class I histocompatibility antigen, alpha chain H (HLA-H).